Reading from the N-terminus, the 486-residue chain is 3-sulfolactaldehyde dehydrogenase (486 aa).

NADP(+)-binding positions include 157-158, 181-184, and 234-235; these read WN, RPAS, and GS. The active-site Proton acceptor is the Glu-256. Leu-257 is an NADP(+) binding site. Cys-290 (nucleophile) is an active-site residue. NADP(+) is bound at residue Glu-387.

This sequence belongs to the aldehyde dehydrogenase family.

The catalysed reaction is (2S)-3-sulfolactaldehyde + NADP(+) + H2O = (2S)-3-sulfolactate + NADPH + 2 H(+). The enzyme catalyses (2S)-3-sulfolactaldehyde + NAD(+) + H2O = (2S)-3-sulfolactate + NADH + 2 H(+). Catalyzes the oxidation of (2S)-3-sulfolactaldehyde to (2S)-3-sulfolactate, using both NAD(+) and NADP(+) as electron acceptors. Is involved in a degradation pathway of sulfoquinovose (SQ) that allows P.putida SQ1 to use SQ as the sole carbon and energy source for growth. In Pseudomonas putida (Arthrobacter siderocapsulatus), this protein is 3-sulfolactaldehyde dehydrogenase.